We begin with the raw amino-acid sequence, 530 residues long: TNF receptor-associated factor family protein DDB_G0272829 (530 aa).

Residues 35-81 (CQICEGLLISSLIPNRMKALQCINGHCFCLTCWESILEIKSECPTCR) form an RING-type; degenerate zinc finger. 2 TRAF-type zinc fingers span residues 134 to 188 (RHES…KQMQ) and 189 to 246 (GHIL…NDND). 3 disordered regions span residues 242 to 267 (NNDN…LSSS), 391 to 432 (TTTT…DNQG), and 483 to 530 (FNQL…GTSL). 3 stretches are compositionally biased toward low complexity: residues 253-267 (NNSN…LSSS), 391-415 (TTTT…NNNN), and 485-502 (QLSQ…SQSL). A coiled-coil region spans residues 361-422 (ILEHQQQQNQ…NNNNEDEEDD (62 aa)). The segment covering 509 to 530 (ITINQNQNTPSNPFSIFSGTSL) has biased composition (polar residues).

Belongs to the TNF receptor-associated factor family.

It is found in the cytoplasm. Its function is as follows. Probable adapter protein and signal transducer that links members of the tumor necrosis factor receptor family to different signaling pathways by association with the receptor cytoplasmic domain and kinases. This chain is TNF receptor-associated factor family protein DDB_G0272829, found in Dictyostelium discoideum (Social amoeba).